Here is a 258-residue protein sequence, read N- to C-terminus: tRNA pseudouridine synthase A (258 aa).

D52 functions as the Nucleophile in the catalytic mechanism. Substrate is bound at residue Y110.

The protein belongs to the tRNA pseudouridine synthase TruA family. In terms of assembly, homodimer.

The enzyme catalyses uridine(38/39/40) in tRNA = pseudouridine(38/39/40) in tRNA. In terms of biological role, formation of pseudouridine at positions 38, 39 and 40 in the anticodon stem and loop of transfer RNAs. In Francisella tularensis subsp. novicida (strain U112), this protein is tRNA pseudouridine synthase A.